Here is a 201-residue protein sequence, read N- to C-terminus: MYB-like transcription factor EOBI (201 aa).

HTH myb-type domains are found at residues aspartate 10–leucine 62 and arginine 63–isoleucine 117. DNA-binding regions (H-T-H motif) lie at residues tryptophan 38–leucine 62 and tryptophan 90–isoleucine 113. The tract at residues aspartate 121–isoleucine 170 is disordered. Residues glutamine 135–tyrosine 159 are compositionally biased toward polar residues. A compositionally biased stretch (low complexity) spans threonine 160 to asparagine 169.

In terms of tissue distribution, expressed exclusively in flower organs. Accumulates mostly in flower limbs, to a lower extent in pistils and flower tubes, and, at low levels, in stamens.

The protein resides in the nucleus. In terms of biological role, MYB-type transcription factor controlling the production of volatile organic compounds (VOCs), including floral volatile benzenoids and phenylpropanoids (FVBP), in flowers of fragrant cultivars (e.g. cv. Mitchell and cv. V26) by regulating the expression of ODO1, a key regulator of the shikimate pathway, and of several biosynthetic floral scent-related genes (e.g. IGS, EGS, BSMT1, BSMT2, PAL1, PAL2, EPSPS, DAHPS, CS, CM1, ADT1 and PPA-AT). Binds to and activates the promoters of at least ODO1, IGS1 and PAL1. This Petunia hybrida (Petunia) protein is MYB-like transcription factor EOBI.